A 1043-amino-acid chain; its full sequence is tRNA wybutosine-synthesizing protein 2/3/4 (1043 aa).

The tract at residues 1 to 233 (MEFDRRKAAA…PVLQNGAKHG (233 aa)) is tRNA wybutosine-synthesizing protein 3 homolog. Positions 53-75 (RVSVLAQPPPPQQADPGGAKTKK) are disordered. Kelch repeat units lie at residues 360–410 (DIYV…AVDR), 412–460 (VYVF…SYGS), 461–510 (KLFL…IYKD), and 512–559 (LGIL…VIID). Positions 700-1041 (QPDDSCVFEE…RHLVVDVKCR (342 aa)) are tRNA wybutosine-synthesizing protein 2 homolog. Residues Lys-874 and 942–943 (DN) contribute to the S-adenosyl-L-methionine site.

This sequence in the C-terminal section; belongs to the class I-like SAM-binding methyltransferase superfamily. TRM5/TYW2 family. The protein in the N-terminal section; belongs to the TYW3 family.

It catalyses the reaction 4-demethyl-7-[(3S)-3-amino-3-carboxypropyl]wyosine(37) in tRNA(Phe) + S-adenosyl-L-methionine = 7-[(3S)-3-amino-3-carboxypropyl]wyosine(37) in tRNA(Phe) + S-adenosyl-L-homocysteine + H(+). The enzyme catalyses 4-demethylwyosine(37) in tRNA(Phe) + S-adenosyl-L-methionine = 4-demethyl-7-[(3S)-3-amino-3-carboxypropyl]wyosine(37) in tRNA(Phe) + S-methyl-5'-thioadenosine + H(+). Its pathway is tRNA modification; wybutosine-tRNA(Phe) biosynthesis. Its function is as follows. S-adenosyl-L-methionine-dependent transferase that acts as a component of the wybutosine biosynthesis pathway. Wybutosine is a hyper modified guanosine with a tricyclic base found at the 3'-position adjacent to the anticodon of eukaryotic phenylalanine tRNA. In Oryza sativa subsp. japonica (Rice), this protein is tRNA wybutosine-synthesizing protein 2/3/4.